Consider the following 255-residue polypeptide: MALPDFTMRQLLEAGVHFGHQTHRWNPKMKPYIFGDRNNVHIIDLAQTVPMLSRALQVVSDTVASGGRVLFVGTKRQASEIIADAAKRSAQYYVNARWLGGMMTNWKTISNSIQRLRKLDEILASEASGFTKKERLNLEREREKLNRALGGIRDMGGTPDLMFIIDTNKESIAIEEAKRLGIPVVAVIDSNCDPDQIDYPIPGNDDASRAVALYCDLIARAAIDGIARQQGASGRDLGASEEVPVEPALEEASEA.

Residues 232 to 255 (ASGRDLGASEEVPVEPALEEASEA) are disordered.

Belongs to the universal ribosomal protein uS2 family.

In Sinorhizobium medicae (strain WSM419) (Ensifer medicae), this protein is Small ribosomal subunit protein uS2.